The chain runs to 118 residues: Small ribosomal subunit protein bTHXc (118 aa).

A chloroplast-targeting transit peptide spans 1–55 (MASLILGAPPRVTVALPSSRLSSSHSETAGVSLSCFTHQFSLSTSSSSSIPLVYC). Positions 61-118 (KTAKGKRFNHSFGNARPRNKSKGRGPERVPVPPAPPRKDKFENDEKIKIDIDESLFSN) are disordered. The segment covering 96 to 111 (PRKDKFENDEKIKIDI) has biased composition (basic and acidic residues). The residue at position 117 (S117) is a Phosphoserine.

This sequence belongs to the bacterial ribosomal protein bTHX family. Part of the 30S ribosomal subunit.

Its subcellular location is the plastid. The protein localises to the chloroplast. This is Small ribosomal subunit protein bTHXc (RPS31) from Arabidopsis thaliana (Mouse-ear cress).